Reading from the N-terminus, the 294-residue chain is ATP synthase gamma chain (294 aa).

It belongs to the ATPase gamma chain family. In terms of assembly, F-type ATPases have 2 components, CF(1) - the catalytic core - and CF(0) - the membrane proton channel. CF(1) has five subunits: alpha(3), beta(3), gamma(1), delta(1), epsilon(1). CF(0) has three main subunits: a, b and c.

The protein resides in the cell membrane. Its function is as follows. Produces ATP from ADP in the presence of a proton gradient across the membrane. The gamma chain is believed to be important in regulating ATPase activity and the flow of protons through the CF(0) complex. The chain is ATP synthase gamma chain from Ruminiclostridium cellulolyticum (strain ATCC 35319 / DSM 5812 / JCM 6584 / H10) (Clostridium cellulolyticum).